The chain runs to 439 residues: Glutamate-1-semialdehyde 2,1-aminomutase (439 aa).

The residue at position 273 (lysine 273) is an N6-(pyridoxal phosphate)lysine.

Belongs to the class-III pyridoxal-phosphate-dependent aminotransferase family. HemL subfamily. As to quaternary structure, homodimer. Pyridoxal 5'-phosphate is required as a cofactor.

Its subcellular location is the cytoplasm. The catalysed reaction is (S)-4-amino-5-oxopentanoate = 5-aminolevulinate. It participates in porphyrin-containing compound metabolism; protoporphyrin-IX biosynthesis; 5-aminolevulinate from L-glutamyl-tRNA(Glu): step 2/2. The polypeptide is Glutamate-1-semialdehyde 2,1-aminomutase (Paenarthrobacter aurescens (strain TC1)).